A 550-amino-acid polypeptide reads, in one-letter code: MFCVQCEQTIRTPAGNGCSYAQGMCGKTAETSDLQDLLIAALQGLSAWAVKAREYGIINHDVDSFAPRAFFSTLTNVNFDSPRIVGYAREAIALREALKAQCLAVDANARVDNPMADLQLVSDDLGELQRQAAEFTPNKDKAAIGENILGLRLLCLYGLKGAAAYMEHAHVLGQYDNDIYAQYHKIMAWLGTWPADMNALLECSMEIGQMNFKVMSILDAGETGKYGHPTPTQVNVKATAGKCILISGHDLKDLYNLLEQTEGTGVNVYTHGEMLPAHGYPELRKFKHLVGNYGSGWQNQQVEFARFPGPIVMTSNCIIDPTVGAYDDRIWTRSIVGWPGVRHLDGEDFSAVIAQAQQMAGFPYSEIPHLITVGFGRQTLLGAADTLIDLVSREKLRHIFLLGGCDGARGERHYFTDFATSVPDDCLILTLACGKYRFNKLEFGDIEGLPRLVDAGQCNDAYSAIILAVTLAEKLGCGVNDLPLSLVLSWFEQKAIVILLTLLSLGVKNIVTGPTAPGFLTPDLLAVLNEKFGLRSITTVEEDMKQLLSA.

[2Fe-2S] cluster contacts are provided by Cys3, Cys6, Cys18, and Cys25. Hybrid [4Fe-2O-2S] cluster is bound by residues His249, Glu273, Cys317, Cys405, Cys433, Cys458, Glu492, and Lys494. The residue at position 405 (Cys405) is a Cysteine persulfide.

Belongs to the HCP family. The cofactor is [2Fe-2S] cluster. Hybrid [4Fe-2O-2S] cluster serves as cofactor.

It localises to the cytoplasm. The catalysed reaction is A + NH4(+) + H2O = hydroxylamine + AH2 + H(+). Functionally, catalyzes the reduction of hydroxylamine to form NH(3) and H(2)O. The protein is Hydroxylamine reductase of Escherichia coli O17:K52:H18 (strain UMN026 / ExPEC).